Reading from the N-terminus, the 446-residue chain is Coagulation factor VII (446 aa).

The first 24 residues, 1-24, serve as a signal peptide directing secretion; the sequence is MVPQTHGLLLLYFLLQLQGPLGAV. The propeptide occupies 25–41; sequence VFITQEEAHGVLHRQRR. The Gla domain occupies 42–86; that stretch reads ANSLLEELWSSSLERECNEERCSFEEAREIFKSPERTKQFWTIYS. Residues Glu-47, Glu-48, Glu-55, Glu-57, Glu-60, Glu-61, Glu-66, Glu-67, Glu-70, and Glu-76 each carry the 4-carboxyglutamate modification. Cys-58 and Cys-63 are oxidised to a cystine. Residues 87–123 enclose the EGF-like 1; calcium-binding domain; that stretch reads DGDQCASNPCQNGGTCQDHLKSYVCFCPLDFEGRNCE. Cystine bridges form between Cys-91–Cys-102, Cys-96–Cys-111, Cys-113–Cys-122, Cys-132–Cys-143, Cys-139–Cys-153, Cys-155–Cys-168, Cys-176–Cys-303, Cys-200–Cys-205, Cys-219–Cys-235, and Cys-351–Cys-370. Ser-93 carries an O-linked (Glc...) serine; alternate glycan. Ser-93 carries O-linked (Xyl...) serine; alternate glycosylation. The O-linked (Fuc) threonine glycan is linked to Thr-101. Asp-104 carries the (3R)-3-hydroxyaspartate modification. Positions 128–169 constitute an EGF-like 2 domain; it reads EQLICANENGDCDQYCRDHVGTKRTCSCHEDYVLQPDEVSCK. N-linked (GlcNAc...) asparagine glycosylation is present at Asn-186. Residues 194–433 enclose the Peptidase S1 domain; that stretch reads IVGGYVCPKG…YIDWLVKYMD (240 aa). His-234 functions as the Charge relay system in the catalytic mechanism. N-linked (GlcNAc...) asparagine glycosylation is present at Asn-244. The active-site Charge relay system is the Asp-283. Asp-379 provides a ligand contact to substrate. Residues Cys-381 and Cys-409 are joined by a disulfide bond. Ser-385 acts as the Charge relay system in catalysis.

It belongs to the peptidase S1 family. Heterodimer of a light chain and a heavy chain linked by a disulfide bond. In terms of processing, the vitamin K-dependent, enzymatic carboxylation of some glutamate residues allows the modified protein to bind calcium. Post-translationally, the iron and 2-oxoglutarate dependent 3-hydroxylation of aspartate and asparagine is (R) stereospecific within EGF domains. Can be either O-glucosylated or O-xylosylated at Ser-93 by POGLUT1. In terms of tissue distribution, plasma.

The protein localises to the secreted. The enzyme catalyses Selective cleavage of Arg-|-Ile bond in factor X to form factor Xa.. Its function is as follows. Initiates the extrinsic pathway of blood coagulation. Serine protease that circulates in the blood in a zymogen form. Factor VII is converted to factor VIIa by factor Xa, factor XIIa, factor IXa, or thrombin by minor proteolysis. In the presence of tissue factor and calcium ions, factor VIIa then converts factor X to factor Xa by limited proteolysis. Factor VIIa also converts factor IX to factor IXa in the presence of tissue factor and calcium. The sequence is that of Coagulation factor VII (F7) from Rattus norvegicus (Rat).